Reading from the N-terminus, the 113-residue chain is Integration host factor subunit alpha (113 aa).

Disordered stretches follow at residues 59–80 (GNFQ…GETI) and 94–113 (QKLK…ASAE). Pro residues predominate over residues 104 to 113 (NSPPDPASAE).

This sequence belongs to the bacterial histone-like protein family. As to quaternary structure, heterodimer of an alpha and a beta chain.

Functionally, this protein is one of the two subunits of integration host factor, a specific DNA-binding protein that functions in genetic recombination as well as in transcriptional and translational control. This chain is Integration host factor subunit alpha, found in Bordetella pertussis (strain Tohama I / ATCC BAA-589 / NCTC 13251).